A 604-amino-acid polypeptide reads, in one-letter code: Protein TAX4 (604 aa).

5 disordered regions span residues 38–77 (HPNGNAGSAERPRHLKVESAPVVKSEPSLPRMRQPEPRSI), 132–249 (SFSN…RQQE), 267–299 (GTLPDLIPRSQRKTSKPRFKHRLLRSPEQQQEN), 338–380 (DETF…KGLK), and 394–428 (PFPHHHHHHHQLHNPNSHHLHTHHHTSSHKFNEDK). A compositionally biased stretch (polar residues) spans 176 to 185 (YDNNVRSRSI). Low complexity-rich tracts occupy residues 186–203 (SPQVSYSTSLSSSCSISS) and 224–240 (SMSSYSLASKASAKASL). 3 stretches are compositionally biased toward basic residues: residues 276-290 (SQRKTSKPRFKHRLL), 366-379 (KKKKSRRSKIKKGL), and 396-421 (PHHHHHHHQLHNPNSHHLHTHHHTSS). One can recognise an EH domain in the interval 469–559 (ANEDDESHLQ…RVWNSVDGYV (91 aa)).

The protein belongs to the IRS4 family. As to quaternary structure, interacts with INP51.

With IRS4, acts as a positive regulator of INP51 activity and phosphatidylinositol 4,5-bisphosphate turnover. Negatively regulates signaling through the cell integrity pathway, including the MAP kinase SLT2. In Saccharomyces cerevisiae (strain ATCC 204508 / S288c) (Baker's yeast), this protein is Protein TAX4 (TAX4).